A 239-amino-acid chain; its full sequence is 7-cyano-7-deazaguanine synthase (239 aa).

12 to 22 (FSGGQDSATCL) contributes to the ATP binding site. 4 residues coordinate Zn(2+): Cys-200, Cys-215, Cys-218, and Cys-221.

It belongs to the QueC family. The cofactor is Zn(2+).

The enzyme catalyses 7-carboxy-7-deazaguanine + NH4(+) + ATP = 7-cyano-7-deazaguanine + ADP + phosphate + H2O + H(+). Its pathway is purine metabolism; 7-cyano-7-deazaguanine biosynthesis. Functionally, catalyzes the ATP-dependent conversion of 7-carboxy-7-deazaguanine (CDG) to 7-cyano-7-deazaguanine (preQ(0)). This Hyphomonas neptunium (strain ATCC 15444) protein is 7-cyano-7-deazaguanine synthase.